Consider the following 528-residue polypeptide: UDP-glucuronosyltransferase 2B30 (528 aa).

The first 23 residues, methionine 1–cysteine 23, serve as a signal peptide directing secretion. An N6-succinyllysine modification is found at lysine 135. A glycan (N-linked (GlcNAc...) asparagine) is linked at asparagine 315. The helical transmembrane segment at valine 493–phenylalanine 513 threads the bilayer.

The protein belongs to the UDP-glycosyltransferase family. As to expression, expressed in several tissues, including prostate, testis, mammary gland, kidney, adrenals and intestine.

The protein localises to the microsome membrane. Its subcellular location is the endoplasmic reticulum membrane. The catalysed reaction is glucuronate acceptor + UDP-alpha-D-glucuronate = acceptor beta-D-glucuronoside + UDP + H(+). UDPGTs are of major importance in the conjugation and subsequent elimination of potentially toxic xenobiotics and endogenous compounds. This isozyme has glucuronidating capacity on testosterone, dihydrotestosterone, 5-alpha-androstane-3-alpha,17-beta-diol, androsterone, oestradiol, tetrahydroaldosterone and tetrahydrocortisone. This enzyme is essential to inactivation of several steroids. The protein is UDP-glucuronosyltransferase 2B30 (UGT2B30) of Macaca fascicularis (Crab-eating macaque).